The chain runs to 479 residues: Aspartyl/glutamyl-tRNA(Asn/Gln) amidotransferase subunit B (479 aa).

Belongs to the GatB/GatE family. GatB subfamily. In terms of assembly, heterotrimer of A, B and C subunits.

The enzyme catalyses L-glutamyl-tRNA(Gln) + L-glutamine + ATP + H2O = L-glutaminyl-tRNA(Gln) + L-glutamate + ADP + phosphate + H(+). It carries out the reaction L-aspartyl-tRNA(Asn) + L-glutamine + ATP + H2O = L-asparaginyl-tRNA(Asn) + L-glutamate + ADP + phosphate + 2 H(+). In terms of biological role, allows the formation of correctly charged Asn-tRNA(Asn) or Gln-tRNA(Gln) through the transamidation of misacylated Asp-tRNA(Asn) or Glu-tRNA(Gln) in organisms which lack either or both of asparaginyl-tRNA or glutaminyl-tRNA synthetases. The reaction takes place in the presence of glutamine and ATP through an activated phospho-Asp-tRNA(Asn) or phospho-Glu-tRNA(Gln). The sequence is that of Aspartyl/glutamyl-tRNA(Asn/Gln) amidotransferase subunit B from Streptococcus suis (strain 98HAH33).